We begin with the raw amino-acid sequence, 347 residues long: Protein phosphatase 1 regulatory subunit 3G (347 aa).

Positions 1-77 are disordered; it reads MDPSGEQLHR…ELQEYRRSRA (77 aa). Residues 13–22 are compositionally biased toward polar residues; that stretch reads ASSSTSSGDP. A Phosphoserine modification is found at Ser81. The CBM21 domain occupies 200-339; it reads EERLRRQRVC…NNEGANYTLR (140 aa). The tract at residues 258–286 is disordered; sequence DPESVEPLPPLQSGDSGSKAEDSEEGPGT.

Functionally, glycogen-targeting subunit for protein phosphatase 1 (PP1). Involved in the regulation of hepatic glycogenesis in a manner coupled to the fasting-feeding cycle and distinct from other glycogen-targeting subunits. This Mus musculus (Mouse) protein is Protein phosphatase 1 regulatory subunit 3G (Ppp1r3g).